A 332-amino-acid chain; its full sequence is T-cell surface glycoprotein CD1c2 (332 aa).

The signal sequence occupies residues Met-1–Ile-17. Over Thr-18–Ser-300 the chain is Extracellular. 3 N-linked (GlcNAc...) asparagine glycosylation sites follow: Asn-25, Asn-38, and Asn-75. Disulfide bonds link Cys-120-Cys-184 and Cys-224-Cys-279. Residues Pro-205 to Ile-292 form the Ig-like domain. Residues Val-301–Leu-321 form a helical membrane-spanning segment. At Cys-322–Pro-332 the chain is on the cytoplasmic side.

Heterodimer with B2M (beta-2-microglobulin).

It is found in the cell membrane. The protein resides in the endosome membrane. Its function is as follows. Antigen-presenting protein that binds self and non-self lipid and glycolipid antigens and presents them to T-cell receptors on natural killer T-cells. This is T-cell surface glycoprotein CD1c2 (CD1C2) from Cavia porcellus (Guinea pig).